Reading from the N-terminus, the 570-residue chain is Adenine deaminase (570 aa).

This sequence belongs to the metallo-dependent hydrolases superfamily. Adenine deaminase family. Mn(2+) serves as cofactor.

It carries out the reaction adenine + H2O + H(+) = hypoxanthine + NH4(+). This is Adenine deaminase from Petrotoga mobilis (strain DSM 10674 / SJ95).